Reading from the N-terminus, the 458-residue chain is uncharacterized protein (458 aa).

The next 12 helical transmembrane spans lie at 26–46, 47–67, 95–115, 125–145, 160–180, 208–228, 251–271, 278–298, 342–362, 365–385, 409–429, and 432–452; these read LIAI…KSIH, FAGP…FLIM, AAFI…MADL, WLPG…LLIM, FALI…VMIF, GFIL…LVGL, VLLF…WDII, FVQV…NFVV, ALFF…IMPE, FTLI…ITVI, PFTN…LALA, and TRVS…IYKV.

This sequence belongs to the amino acid-polyamine-organocation (APC) superfamily.

It localises to the cell membrane. Functionally, probable amino-acid or metabolite transport protein. This is an uncharacterized protein from Bacillus subtilis (strain 168).